A 285-amino-acid polypeptide reads, in one-letter code: Bifunctional protein FolD 2 (285 aa).

Residues G164–S166, S189, and V230 contribute to the NADP(+) site.

The protein belongs to the tetrahydrofolate dehydrogenase/cyclohydrolase family. In terms of assembly, homodimer.

It carries out the reaction (6R)-5,10-methylene-5,6,7,8-tetrahydrofolate + NADP(+) = (6R)-5,10-methenyltetrahydrofolate + NADPH. It catalyses the reaction (6R)-5,10-methenyltetrahydrofolate + H2O = (6R)-10-formyltetrahydrofolate + H(+). The protein operates within one-carbon metabolism; tetrahydrofolate interconversion. Catalyzes the oxidation of 5,10-methylenetetrahydrofolate to 5,10-methenyltetrahydrofolate and then the hydrolysis of 5,10-methenyltetrahydrofolate to 10-formyltetrahydrofolate. The protein is Bifunctional protein FolD 2 of Geobacter sulfurreducens (strain ATCC 51573 / DSM 12127 / PCA).